The primary structure comprises 151 residues: MRGILDDIDKKIIEILQKDGKVPLREISKITGLAESTIHERIKRLRESGVIKKFTAVVNPEALGYNILAFILIKVKAGKYSEVASKLVKYPEIVEVYETTGDYDMVVKIRTKNSEELNNFLDMVGSIEGVEGTHTMIVLKVHKETTELPVK.

Residues 5-66 (LDDIDKKIIE…VVNPEALGYN (62 aa)) enclose the HTH asnC-type domain. Residues 24–43 (LREISKITGLAESTIHERIK) constitute a DNA-binding region (H-T-H motif). L-arginine is bound at residue 98–104 (ETTGDYD). L-lysine-binding positions include asparagine 118, aspartate 122, and 133–135 (THT). L-arginine is bound by residues aspartate 122 and 133–135 (THT).

In terms of assembly, homodimer. Binds DNA as a dimer and an octamer.

With respect to regulation, in the famine mode, FL11 forms dimers and acts as a repressor, leading to growth arrest. In the feast mode, in the presence of high concentrations of lysine or arginine, four dimers assemble into an octamer and cover the fl11 and lysine biosynthesis promoters. This leads to the inhibition of fl11 expression and lysine biosynthesis, decrease of the FL11 concentration in the cell, derepression of the target genes and activation of the metabolism. DNA-binding protein involved in the repression of transcription of a large number of genes, thereby arresting growth, in response to environmental changes. This chain is HTH-type transcriptional regulator FL11, found in Pyrococcus furiosus (strain ATCC 43587 / DSM 3638 / JCM 8422 / Vc1).